Consider the following 1024-residue polypeptide: Multidrug resistance protein MdtC (1024 aa).

12 helical membrane passes run 12–32 (VATT…FSLL), 333–353 (EVER…FLFL), 360–380 (LIPA…MYLC), 387–407 (LSLM…IVVL), 431–451 (VGFT…PLLL), 463–483 (FAVT…TLTP), 528–548 (WVMV…ISIP), 853–873 (LWLI…LYES), 875–895 (VHPL…LLAL), 897–917 (LFDA…IGIV), 953–973 (PILM…ISSG), and 984–1004 (ITIV…TPVV).

It belongs to the resistance-nodulation-cell division (RND) (TC 2.A.6) family. MdtC subfamily. In terms of assembly, part of a tripartite efflux system composed of MdtA, MdtB and MdtC. MdtC forms a heteromultimer with MdtB.

Its subcellular location is the cell inner membrane. This Yersinia enterocolitica serotype O:8 / biotype 1B (strain NCTC 13174 / 8081) protein is Multidrug resistance protein MdtC.